The following is a 199-amino-acid chain: Tumor protein p53-inducible nuclear protein 2 (199 aa).

The LIR signature appears at 26–41 (VSEEDEVDGWLIIDLQ). 3 disordered regions span residues 41-69 (QDSYTAPPDPRASPAPAGRPPPAPSLMDE), 117-153 (LESGPPSPHPEAALPDQDLSDGELAPARREPRALHHA), and 173-199 (LQRARQRAERHTLSAKVLQRQNRARES). The segment covering 47-64 (PPDPRASPAPAGRPPPAP) has biased composition (pro residues). At serine 136 the chain carries Phosphoserine.

As to quaternary structure, interacts with VMP1, GABARAP, GABARAPL1, GABARAPL2, MAP1LC3A, MAP1LC3B, MAP1LC3C and THRA. In terms of tissue distribution, abundantly expressed in skeletal muscle and heart and expression is highly repressed in muscle from obese diabetic rats.

The protein resides in the cytoplasm. Its subcellular location is the cytosol. It is found in the nucleus. It localises to the PML body. The protein localises to the cytoplasmic vesicle. The protein resides in the autophagosome. Dual regulator of transcription and autophagy. Positively regulates autophagy and is required for autophagosome formation and processing. May act as a scaffold protein that recruits MAP1LC3A, GABARAP and GABARAPL2 and brings them to the autophagosome membrane by interacting with VMP1 where, in cooperation with the BECN1-PI3-kinase class III complex, they trigger autophagosome development. Acts as a transcriptional activator of THRA. This chain is Tumor protein p53-inducible nuclear protein 2 (Tp53inp2), found in Rattus norvegicus (Rat).